Here is a 1112-residue protein sequence, read N- to C-terminus: MIAVSFKCRCQILRRLTKDESPYTKSASQTKPPDGALAVRRQSIPEEFKGSTVVELMKKEGTTLGLTVSGGIDKDGKPRVSNLRQGGIAARSDQLDVGDYIKAVNGINLAKFRHDEIISLLKNVGERVVLEVEYELPPVSIQGSSVMFRTVEVTLHKEGNTFGFVIRGGAHDDRNKSRPVVITCVRPGGPADREGTIKPGDRLLSVDGIRLLGTTHAEAMSILKQCGQEATLLIEYDVSVMDSVATASGPLLVEVAKTPGASLGVALTTSVCCNKQVIVIDKIKSASIADRCGALHVGDHILSIDGTSMEYCTLAEATQFLANTTDQVKLEILPHHQTRLALKGPDHVKIQRSDRQLPWDPWASSQCSVHTNHHHNPHHPDHCRVPALGFPKALTPNSPPAMVSSSSPTSMSAYSLSSLNMGTLPRSLYSTSPRGTMMRRRLKKKDFKSSLSLASSTVGLAGQVVHTETTEVVLTADPVTGFGIQLQGSVFATETLSSPPLISYIEADSPAERCGVLQIGDRVMAINGIPTEDSTFEEANQLLRDSSITSKVTLEIEFDVAESVIPSSGTFHVKLPKKHSVELGITISSPSSRKPGDPLVISDIKKGSVAHRTGTLELGDKLLAIDNIRLDSCSMEDAVQILQQCEDLVKLKIRKDEDNSDEQESSGAIIYTVELKRYGGPLGITISGTEEPFDPIIISSLTKGGLAERTGAIHIGDRILAINSSSLKGKPLSEAIHLLQMAGETVTLKIKKQTDAQPASSPKKLPIPSHSSDLGDGEEDPSPIQRPGKLSDVYPSTVPSVDSAVDSWDGSGIDARYGSQGTTFQTSGYNFNTYDWRSPKKRASLSPVPKPRSQTYPDVGLSNEDWDRSTASGFAGASDSADAEQEENFWSQALEDLETCGQSGILRELEATIMSGSTMSLNHEAPTARSQLGRQASFQERSNSRPHYSQTTRSNTLPSDVGRKSVTLRKMKQEIKEIMSPTPVELHKVTLYKDSGMEDFGFSVADGLLEKGVYVKNIRPAGPGDLGGLKPYDRLLQVNHVRTRDFDCCLVVPLIAESGNKLDLVISRNPLASQKSIEQPALPSDWSEQNSAFFQQPSHGGNLETREPTNTL.

S43 is modified (phosphoserine). 6 consecutive PDZ domains span residues V53–L136, T150–V238, L252–H336, E471–V560, H572–E657, and T672–T754. Disordered regions lie at residues K752–S796, K841–E886, and N922–R963. The span at S869–S880 shows a compositional bias: low complexity. Over residues A928 to P958 the composition is skewed to polar residues. The region spanning K988–P1070 is the PDZ 7 domain. The disordered stretch occupies residues I1077–L1112. A compositionally biased stretch (polar residues) spans W1086 to H1099.

As to quaternary structure, interacts with EFNB1, EPHA7, EPHB2, EFNB3, KIF5A, KIF5C, KIF5B and the C-terminal tail of PRLHR. Forms a ternary complex with GRIA2 and CSPG4. Can form homomultimers or heteromultimers with GRIP2. Interacts with GRIA2, GRIA3, GRIPAP1/GRASP1, PPFIA1, PPFIA4, FRAS1, PLCD4, PTPRF and liprins-alpha. Interacts with ATAD1 in an ATP-dependent manner. ATAD1-catalyzed ATP hydrolysis disrupts binding to ATAD1 and to GRIA2 and leads to AMPAR complex disassembly. Interacts with SLC30A9. Interacts with BUD23. Forms a complex with NSG1, GRIA2 and STX12; controls the intracellular fate of AMPAR and the endosomal sorting of the GRIA2 subunit toward recycling and membrane targeting. Interacts with NSG1. Expressed in brain, testis and retina. In brain highly expressed in the olfactory bulb, cortex and hippocampus and lower level in thalamus, cerebellum and spinal cord. In brain it is found in the perikaryon, dendrites, dendritic shafts, dendritic spines and, excitatory and inhibitory synapses of neurons. In retina, it is most abundant in the plexiform layers than in perikarya.

It is found in the cytoplasmic vesicle. Its subcellular location is the perikaryon. It localises to the cell projection. The protein localises to the dendrite. The protein resides in the cytoplasm. It is found in the endomembrane system. Its subcellular location is the postsynaptic cell membrane. It localises to the postsynaptic density. The protein localises to the endoplasmic reticulum membrane. In terms of biological role, may play a role as a localized scaffold for the assembly of a multiprotein signaling complex and as mediator of the trafficking of its binding partners at specific subcellular location in neurons. Through complex formation with NSG1, GRIA2 and STX12 controls the intracellular fate of AMPAR and the endosomal sorting of the GRIA2 subunit toward recycling and membrane targeting. This Rattus norvegicus (Rat) protein is Glutamate receptor-interacting protein 1 (Grip1).